A 112-amino-acid chain; its full sequence is Putative regulatory protein DP2861 (112 aa).

It belongs to the RemA family.

In Desulfotalea psychrophila (strain LSv54 / DSM 12343), this protein is Putative regulatory protein DP2861.